We begin with the raw amino-acid sequence, 186 residues long: Meiotically up-regulated gene 163 protein (186 aa).

The protein localises to the mitochondrion. Has a role in meiosis. This Schizosaccharomyces pombe (strain 972 / ATCC 24843) (Fission yeast) protein is Meiotically up-regulated gene 163 protein (mug163).